The following is a 465-amino-acid chain: tRNA modification GTPase MnmE (465 aa).

(6S)-5-formyl-5,6,7,8-tetrahydrofolate is bound by residues arginine 23, glutamate 81, and lysine 120. The region spanning 217-389 (GVHVVLAGRP…LIASLCDKVG (173 aa)) is the TrmE-type G domain. Asparagine 227 is a binding site for K(+). GTP contacts are provided by residues 227–232 (NAGKSS), 246–252 (TDVAGTT), and 271–274 (DTAG). Residue serine 231 coordinates Mg(2+). Residues threonine 246, valine 248, and threonine 251 each contribute to the K(+) site. Threonine 252 contacts Mg(2+). Lysine 465 serves as a coordination point for (6S)-5-formyl-5,6,7,8-tetrahydrofolate.

The protein belongs to the TRAFAC class TrmE-Era-EngA-EngB-Septin-like GTPase superfamily. TrmE GTPase family. In terms of assembly, homodimer. Heterotetramer of two MnmE and two MnmG subunits. The cofactor is K(+).

It is found in the cytoplasm. Functionally, exhibits a very high intrinsic GTPase hydrolysis rate. Involved in the addition of a carboxymethylaminomethyl (cmnm) group at the wobble position (U34) of certain tRNAs, forming tRNA-cmnm(5)s(2)U34. This is tRNA modification GTPase MnmE from Psychrobacter sp. (strain PRwf-1).